The following is a 106-amino-acid chain: Valine dehydrogenase (106 aa).

Residue lysine 91 is part of the active site.

Belongs to the Glu/Leu/Phe/Val dehydrogenases family. As to quaternary structure, homodimer.

The protein resides in the cytoplasm. The catalysed reaction is L-valine + NAD(+) + H2O = 3-methyl-2-oxobutanoate + NH4(+) + NADH + H(+). It participates in amino-acid degradation; L-valine degradation. Oxidative deamination of branched-chain amino acids. The catabolism of valine is the major source of fatty acid precursors for macrolide biosynthesis and a vital source of antibiotic precursors. This chain is Valine dehydrogenase (vdh), found in Streptomyces ambofaciens.